The following is a 370-amino-acid chain: 4-hydroxy-3-methylbut-2-en-1-yl diphosphate synthase (flavodoxin) (370 aa).

Residues Cys-270, Cys-273, Cys-305, and Glu-312 each contribute to the [4Fe-4S] cluster site.

It belongs to the IspG family. [4Fe-4S] cluster serves as cofactor.

The enzyme catalyses (2E)-4-hydroxy-3-methylbut-2-enyl diphosphate + oxidized [flavodoxin] + H2O + 2 H(+) = 2-C-methyl-D-erythritol 2,4-cyclic diphosphate + reduced [flavodoxin]. The protein operates within isoprenoid biosynthesis; isopentenyl diphosphate biosynthesis via DXP pathway; isopentenyl diphosphate from 1-deoxy-D-xylulose 5-phosphate: step 5/6. In terms of biological role, converts 2C-methyl-D-erythritol 2,4-cyclodiphosphate (ME-2,4cPP) into 1-hydroxy-2-methyl-2-(E)-butenyl 4-diphosphate. The protein is 4-hydroxy-3-methylbut-2-en-1-yl diphosphate synthase (flavodoxin) of Azotobacter vinelandii (strain DJ / ATCC BAA-1303).